We begin with the raw amino-acid sequence, 205 residues long: Syndecan 4-B (205 aa).

Positions 1-17 (MNRLLLLLALVLSGVAA) are cleaved as a signal peptide. Residues 18–162 (ESIRETETMD…FFQRTEVIVA (145 aa)) are Extracellular-facing. The segment at 26–113 (MDPTSMLEYE…HDFDETKTGR (88 aa)) is disordered. S37, S73, and S75 each carry an O-linked (Xyl...) (glycosaminoglycan) serine glycan. A compositionally biased stretch (acidic residues) spans 44 to 94 (VFVDEDDDDDYEDGVDYEIDSESDNDEDYSGSGDDDFDDEDNVEDEDEEET). A compositionally biased stretch (basic and acidic residues) spans 102 to 113 (PEHDFDETKTGR). Residues 163–183 (IIAGTLVGLVVAVSFIVFLVI) form a helical membrane-spanning segment. Over 184–205 (RRNQNGDLVKKPIYKKTSTMEV) the chain is Cytoplasmic.

The protein belongs to the syndecan proteoglycan family. Interacts with the Wnt receptor fzd7 and its signal transducer dvl2/dsh. In terms of processing, O-glycosylated; contains both chondroitin sulfate and heparan sulfate. Ser-37, Ser-73 and Ser-75 can all be modified by either chondroitin sulfate or heparan sulfate, and the protein exists in forms that contain only chondroitin sulfate, only heparan sulfate and both chondroitin sulfate and heparan sulfate. Expressed in the animal hemisphere from the 4-cell to the blastula stage. During gastrulation, expressed in the involuting dorsal mesoderm and ectoderm. After involution, localized mainly to the anterior neuroectoderm. At later stages, expressed in the brain, branchial arches, pronephros, tailbud, and at low levels in the somites.

It localises to the membrane. Cell surface proteoglycan. Regulates non-canonical Wnt signaling, being necessary and sufficient for fibronectrin-mediated translocation of dvl2/dsh to the plasma membrane. Required for proper convergent extension movements during gastrulation, which shape the neural plate, and for subsequent neural tube closure. The sequence is that of Syndecan 4-B (sdc4-b) from Xenopus laevis (African clawed frog).